The sequence spans 153 residues: MTEGSPIKFELVDINAILQTLPHRFPMLLIDRVINIRADYSGIGIKNVTFNEPAFQGHFPERPVYPGVMMIEAMAQTAGVIGIKSVEGTEKPRAVYFLTIDKCKFRKPVLPGDTIEYHMRSLGRRKTMWWFHGDAKVNGQVVAEADVGAMLTD.

H58 is an active-site residue.

The protein belongs to the thioester dehydratase family. FabZ subfamily.

It localises to the cytoplasm. The catalysed reaction is a (3R)-hydroxyacyl-[ACP] = a (2E)-enoyl-[ACP] + H2O. In terms of biological role, involved in unsaturated fatty acids biosynthesis. Catalyzes the dehydration of short chain beta-hydroxyacyl-ACPs and long chain saturated and unsaturated beta-hydroxyacyl-ACPs. The sequence is that of 3-hydroxyacyl-[acyl-carrier-protein] dehydratase FabZ from Bradyrhizobium diazoefficiens (strain JCM 10833 / BCRC 13528 / IAM 13628 / NBRC 14792 / USDA 110).